The chain runs to 328 residues: Cytochrome f (328 aa).

The N-terminal stretch at 1 to 44 is a signal peptide; that stretch reads MRTPDFSAIWQASKQLTARIILLAFATFALYVFHDLAFPQGAAA. Heme is bound by residues Tyr45, Cys66, Cys69, and His70. Residues 294 to 314 form a helical membrane-spanning segment; sequence IKGLMVFLAGIMLAQILLVIK.

Belongs to the cytochrome f family. In terms of assembly, the 4 large subunits of the cytochrome b6-f complex are cytochrome b6, subunit IV (17 kDa polypeptide, PetD), cytochrome f and the Rieske protein, while the 4 small subunits are PetG, PetL, PetM and PetN. The complex functions as a dimer. Requires heme as cofactor.

It is found in the cellular thylakoid membrane. Functionally, component of the cytochrome b6-f complex, which mediates electron transfer between photosystem II (PSII) and photosystem I (PSI), cyclic electron flow around PSI, and state transitions. The protein is Cytochrome f of Rippkaea orientalis (strain PCC 8801 / RF-1) (Cyanothece sp. (strain PCC 8801)).